The primary structure comprises 351 residues: Dysbindin (351 aa).

Positions 106–179 (FLADLECLTA…AELDAEHAQK (74 aa)) form a coiled coil. Residues 291–325 (RHKLSSLSSTCTDSASQEASEGESPVVQSDEEEVQ) are disordered. Residues 295 to 306 (SSLSSTCTDSAS) are compositionally biased toward low complexity.

Belongs to the dysbindin family. As to quaternary structure, component of the biogenesis of lysosome-related organelles complex 1 (BLOC-1).

Its subcellular location is the cytoplasm. It localises to the cytoplasmic vesicle membrane. It is found in the cytoplasmic vesicle. The protein localises to the secretory vesicle. The protein resides in the synaptic vesicle membrane. Its subcellular location is the endosome membrane. It localises to the melanosome membrane. It is found in the nucleus. The protein localises to the postsynaptic density. The protein resides in the endoplasmic reticulum. Component of the BLOC-1 complex, a complex that is required for normal biogenesis of lysosome-related organelles (LRO), such as platelet dense granules and melanosomes. Plays a role in intracellular vesicle trafficking. Plays a role in synaptic vesicle trafficking and in neurotransmitter release. May be required for normal dopamine homeostasis in the cerebral cortex, hippocampus, and hypothalamus. Plays a role in the regulation of cell surface exposure of DRD2. Contributes to the regulation of dopamine signaling. May play a role in actin cytoskeleton reorganization and neurite outgrowth. The sequence is that of Dysbindin (DTNBP1) from Gallus gallus (Chicken).